We begin with the raw amino-acid sequence, 247 residues long: MQIKHNLLDIEGTTAPIAFVHQILFPYATKNIHRFLKEYQLTELQWKEVQTEFQKDTSSGDPLFIEKFRIKNVPSGLIVNEVPNTLSKDMVSVYFEYLIEKDRKFGPLKEIQGKIWKEGYESGEIKSTVFDDVPKFLNDAIQSGIQNHVYSSGSVEAQHLIYQYSVLGDLRQYFTMYFDTAVGGKREKTSYERIASTLAVSPSEIRFFTDIVEEAEAANATGMDVVILNRPGNLAQKPHPFPVWEHF.

It belongs to the HAD-like hydrolase superfamily. MasA/MtnC family. In terms of assembly, monomer. Mg(2+) serves as cofactor.

It catalyses the reaction 5-methylsulfanyl-2,3-dioxopentyl phosphate + H2O = 1,2-dihydroxy-5-(methylsulfanyl)pent-1-en-3-one + phosphate. Its pathway is amino-acid biosynthesis; L-methionine biosynthesis via salvage pathway; L-methionine from S-methyl-5-thio-alpha-D-ribose 1-phosphate: step 3/6. It functions in the pathway amino-acid biosynthesis; L-methionine biosynthesis via salvage pathway; L-methionine from S-methyl-5-thio-alpha-D-ribose 1-phosphate: step 4/6. In terms of biological role, bifunctional enzyme that catalyzes the enolization of 2,3-diketo-5-methylthiopentyl-1-phosphate (DK-MTP-1-P) into the intermediate 2-hydroxy-3-keto-5-methylthiopentenyl-1-phosphate (HK-MTPenyl-1-P), which is then dephosphorylated to form the acireductone 1,2-dihydroxy-3-keto-5-methylthiopentene (DHK-MTPene). The polypeptide is Enolase-phosphatase E1 (Leptospira biflexa serovar Patoc (strain Patoc 1 / Ames)).